A 284-amino-acid polypeptide reads, in one-letter code: RNase adapter protein RapZ (284 aa).

8 to 15 (GRSGSGKS) provides a ligand contact to ATP. 56-59 (DVRN) contributes to the GTP binding site. The segment at 266-284 (RARGKNVQSRHRTLEKRKQ) is RNA-binding.

Belongs to the RapZ-like family. RapZ subfamily. In terms of assembly, homotrimer.

Its function is as follows. Modulates the synthesis of GlmS, by affecting the processing and stability of the regulatory small RNA GlmZ. When glucosamine-6-phosphate (GlcN6P) concentrations are high in the cell, RapZ binds GlmZ and targets it to cleavage by RNase E. Consequently, GlmZ is inactivated and unable to activate GlmS synthesis. Under low GlcN6P concentrations, RapZ is sequestered and inactivated by an other regulatory small RNA, GlmY, preventing GlmZ degradation and leading to synthesis of GlmS. The sequence is that of RNase adapter protein RapZ from Yersinia pseudotuberculosis serotype O:1b (strain IP 31758).